A 578-amino-acid polypeptide reads, in one-letter code: Zinc finger protein with KRAB and SCAN domains 8 (578 aa).

The interval 1-20 (MAEESRKPSAPSPPDQTPEE) is disordered. Phosphoserine is present on Ser12. Residue Lys26 forms a Glycyl lysine isopeptide (Lys-Gly) (interchain with G-Cter in SUMO2) linkage. An SCAN box domain is found at 51-133 (RLRFRQLRYQ…TLLEDLERQI (83 aa)). Residues 158-205 (ASAPEPPNTQLQSEATQHKSPVPQESQERAMSTSQSPTRSQKGSSGDQ) are disordered. Over residues 165-205 (NTQLQSEATQHKSPVPQESQERAMSTSQSPTRSQKGSSGDQ) the composition is skewed to polar residues. Glycyl lysine isopeptide (Lys-Gly) (interchain with G-Cter in SUMO2) cross-links involve residues Lys176 and Lys199. Ser201 carries the post-translational modification Phosphoserine. Residues 220–316 (EKIEDMAVSL…GRLERQRGNP (97 aa)) form the KRAB domain. Glycyl lysine isopeptide (Lys-Gly) (interchain with G-Cter in SUMO2) cross-links involve residues Lys221, Lys272, and Lys288. 2 C2H2-type zinc fingers span residues 322–344 (HKCDECGKSFAQSSGLVRHWRIH) and 350–372 (YQCNVCGKAFSYRSALLSHQDIH). Glycyl lysine isopeptide (Lys-Gly) (interchain with G-Cter in SUMO2) cross-links involve residues Lys374 and Lys376. 7 C2H2-type zinc fingers span residues 378–400 (YHCKECGKAFSQNTGLILHQRIH), 406–428 (YQCNQCGKAFSQSAGLILHQRIH), 434–456 (YECNECGKAFSHSSHLIGHQRIH), 462–484 (YECDECGKTFRRSSHLIGHQRSH), 490–512 (YKCNECGRAFSQKSGLIEHQRIH), 518–540 (YKCKECGKAFNGNTGLIQHLRIH), and 546–568 (YQCNECGKAFIQRSSLIRHQRIH). Residues Lys413 and Lys441 each participate in a glycyl lysine isopeptide (Lys-Gly) (interchain with G-Cter in SUMO2) cross-link. A Glycyl lysine isopeptide (Lys-Gly) (interchain with G-Cter in SUMO2) cross-link involves residue Lys502. Residue Lys572 forms a Glycyl lysine isopeptide (Lys-Gly) (interchain with G-Cter in SUMO2) linkage.

It belongs to the krueppel C2H2-type zinc-finger protein family.

It is found in the nucleus. Its function is as follows. May be involved in transcriptional regulation. This Homo sapiens (Human) protein is Zinc finger protein with KRAB and SCAN domains 8 (ZKSCAN8).